Reading from the N-terminus, the 137-residue chain is Glutamyl-tRNA(Gln) amidotransferase subunit C, chloroplastic/mitochondrial (137 aa).

Belongs to the GatC family. In terms of assembly, subunit of the heterotrimeric GatCAB amidotransferase (AdT) complex, composed of A, B and C subunits.

It is found in the mitochondrion. The protein localises to the plastid. The protein resides in the chloroplast. It carries out the reaction L-glutamyl-tRNA(Gln) + L-glutamine + ATP + H2O = L-glutaminyl-tRNA(Gln) + L-glutamate + ADP + phosphate + H(+). Its function is as follows. Allows the formation of correctly charged Gln-tRNA(Gln) through the transamidation of misacylated Glu-tRNA(Gln) in chloroplasts and mitochondria. The reaction takes place in the presence of glutamine and ATP through an activated gamma-phospho-Glu-tRNA(Gln). This chain is Glutamyl-tRNA(Gln) amidotransferase subunit C, chloroplastic/mitochondrial, found in Vitis vinifera (Grape).